The following is a 489-amino-acid chain: Long chain base biosynthesis protein 2b (489 aa).

Residues 2 to 22 (ITIPYLTAVSTYFSYGLLFAF) form a helical membrane-spanning segment. An N6-(pyridoxal phosphate)lysine modification is found at Lys-311.

The protein belongs to the class-II pyridoxal-phosphate-dependent aminotransferase family. As to quaternary structure, heterodimer with LCB1. Component of the serine palmitoyltransferase (SPT) complex, composed of LCB1 and LCB2 (LCB2a or LCB2b). Pyridoxal 5'-phosphate serves as cofactor. In terms of tissue distribution, ubiquitous with the highest expression in flowers.

Its subcellular location is the endoplasmic reticulum membrane. The enzyme catalyses L-serine + hexadecanoyl-CoA + H(+) = 3-oxosphinganine + CO2 + CoA. It participates in lipid metabolism; sphingolipid metabolism. In terms of biological role, serine palmitoyltransferase (SPT). The heterodimer formed with LCB1 constitutes the catalytic core. Plays an important role during male gametogenesis and embryogenesis. This is Long chain base biosynthesis protein 2b (LCB2b) from Arabidopsis thaliana (Mouse-ear cress).